Reading from the N-terminus, the 375-residue chain is 23S rRNA (uracil(747)-C(5))-methyltransferase RlmC (375 aa).

Cys-3, Cys-11, Cys-14, and Cys-87 together coordinate [4Fe-4S] cluster. S-adenosyl-L-methionine-binding residues include Gln-212, Phe-241, Glu-262, and Asn-307. Cys-334 (nucleophile) is an active-site residue.

It belongs to the class I-like SAM-binding methyltransferase superfamily. RNA M5U methyltransferase family. RlmC subfamily.

It carries out the reaction uridine(747) in 23S rRNA + S-adenosyl-L-methionine = 5-methyluridine(747) in 23S rRNA + S-adenosyl-L-homocysteine + H(+). In terms of biological role, catalyzes the formation of 5-methyl-uridine at position 747 (m5U747) in 23S rRNA. In Salmonella agona (strain SL483), this protein is 23S rRNA (uracil(747)-C(5))-methyltransferase RlmC.